The chain runs to 77 residues: Translation initiation factor IF-1, chloroplastic (77 aa).

The region spanning 1 to 71 is the S1-like domain; that stretch reads MKEQKLIHEG…TRGRIIYRLR (71 aa).

Belongs to the IF-1 family. Component of the 30S ribosomal translation pre-initiation complex which assembles on the 30S ribosome in the order IF-2 and IF-3, IF-1 and N-formylmethionyl-tRNA(fMet); mRNA recruitment can occur at any time during PIC assembly.

Its subcellular location is the plastid. It is found in the chloroplast. One of the essential components for the initiation of protein synthesis. Stabilizes the binding of IF-2 and IF-3 on the 30S subunit to which N-formylmethionyl-tRNA(fMet) subsequently binds. Helps modulate mRNA selection, yielding the 30S pre-initiation complex (PIC). Upon addition of the 50S ribosomal subunit IF-1, IF-2 and IF-3 are released leaving the mature 70S translation initiation complex. The chain is Translation initiation factor IF-1, chloroplastic from Ceratophyllum demersum (Rigid hornwort).